Here is a 416-residue protein sequence, read N- to C-terminus: Serine hydroxymethyltransferase (416 aa).

(6S)-5,6,7,8-tetrahydrofolate contacts are provided by residues Leu-121 and 125 to 127 (GHL). The residue at position 229 (Lys-229) is an N6-(pyridoxal phosphate)lysine.

Belongs to the SHMT family. Homodimer. It depends on pyridoxal 5'-phosphate as a cofactor.

It is found in the cytoplasm. It carries out the reaction (6R)-5,10-methylene-5,6,7,8-tetrahydrofolate + glycine + H2O = (6S)-5,6,7,8-tetrahydrofolate + L-serine. It functions in the pathway one-carbon metabolism; tetrahydrofolate interconversion. Its pathway is amino-acid biosynthesis; glycine biosynthesis; glycine from L-serine: step 1/1. Its function is as follows. Catalyzes the reversible interconversion of serine and glycine with tetrahydrofolate (THF) serving as the one-carbon carrier. This reaction serves as the major source of one-carbon groups required for the biosynthesis of purines, thymidylate, methionine, and other important biomolecules. Also exhibits THF-independent aldolase activity toward beta-hydroxyamino acids, producing glycine and aldehydes, via a retro-aldol mechanism. This chain is Serine hydroxymethyltransferase, found in Neisseria gonorrhoeae.